Here is a 281-residue protein sequence, read N- to C-terminus: Phosphonates import ATP-binding protein PhnC 2 (281 aa).

Positions 4–238 (LTVDNVTKTY…LVDDLYGNVE (235 aa)) constitute an ABC transporter domain. Residue 35–42 (GESGAGKS) participates in ATP binding. A disordered region spans residues 243–281 (ATDNSDNSTVDTSDGTRYDTETGSDGTDEVDVIGRQVES). Low complexity predominate over residues 244-255 (TDNSDNSTVDTS).

The protein belongs to the ABC transporter superfamily. Phosphonates importer (TC 3.A.1.9.1) family. As to quaternary structure, the complex is composed of two ATP-binding proteins (PhnC), two transmembrane proteins (PhnE) and a solute-binding protein (PhnD).

It is found in the cell membrane. It catalyses the reaction phosphonate(out) + ATP + H2O = phosphonate(in) + ADP + phosphate + H(+). In terms of biological role, part of the ABC transporter complex PhnCDE involved in phosphonates import. Responsible for energy coupling to the transport system. The chain is Phosphonates import ATP-binding protein PhnC 2 from Haloquadratum walsbyi (strain DSM 16790 / HBSQ001).